A 160-amino-acid polypeptide reads, in one-letter code: Transcription elongation factor GreA 2 (160 aa).

Residues 9–73 (MTEEGKVKLE…RIKTVEHMLQ (65 aa)) adopt a coiled-coil conformation.

It belongs to the GreA/GreB family.

In terms of biological role, necessary for efficient RNA polymerase transcription elongation past template-encoded arresting sites. The arresting sites in DNA have the property of trapping a certain fraction of elongating RNA polymerases that pass through, resulting in locked ternary complexes. Cleavage of the nascent transcript by cleavage factors such as GreA or GreB allows the resumption of elongation from the new 3'terminus. GreA releases sequences of 2 to 3 nucleotides. The protein is Transcription elongation factor GreA 2 of Lactiplantibacillus plantarum (strain ATCC BAA-793 / NCIMB 8826 / WCFS1) (Lactobacillus plantarum).